Here is a 25-residue protein sequence, read N- to C-terminus: Kappa-conotoxin RIIIJ (25 aa).

Residues Pro-2, Pro-3, Pro-7, Pro-8, Pro-13, Pro-15, and Pro-21 each carry the 4-hydroxyproline modification. 3 disulfides stabilise this stretch: Cys-4-Cys-17, Cys-5-Cys-22, and Cys-12-Cys-23.

The protein belongs to the conotoxin M superfamily. In terms of tissue distribution, expressed by the venom duct.

Its subcellular location is the secreted. Its function is as follows. Kappa-conotoxins inhibits voltage-gated potassium channels. This toxin dose-dependently and reversibly inhibits the Kv1.2/KCNA2 channel in mammalia. Does not exert protective effect on cardiac tissue when administered after an ischemic event. This is Kappa-conotoxin RIIIJ from Conus radiatus (Rayed cone).